A 478-amino-acid polypeptide reads, in one-letter code: DNA gyrase subunit B (478 aa).

One can recognise a Toprim domain in the interval 319–438 (CELYLVEGDS…QGYLYVALPP (120 aa)). Positions 325, 403, and 405 each coordinate Mg(2+).

Belongs to the type II topoisomerase GyrB family. Heterotetramer, composed of two GyrA and two GyrB chains. In the heterotetramer, GyrA contains the active site tyrosine that forms a transient covalent intermediate with DNA, while GyrB binds cofactors and catalyzes ATP hydrolysis. It depends on Mg(2+) as a cofactor. The cofactor is Mn(2+). Ca(2+) is required as a cofactor.

The protein resides in the cytoplasm. The enzyme catalyses ATP-dependent breakage, passage and rejoining of double-stranded DNA.. Its function is as follows. A type II topoisomerase that negatively supercoils closed circular double-stranded (ds) DNA in an ATP-dependent manner to modulate DNA topology and maintain chromosomes in an underwound state. Negative supercoiling favors strand separation, and DNA replication, transcription, recombination and repair, all of which involve strand separation. Also able to catalyze the interconversion of other topological isomers of dsDNA rings, including catenanes and knotted rings. Type II topoisomerases break and join 2 DNA strands simultaneously in an ATP-dependent manner. This is DNA gyrase subunit B (gyrB) from Eisenibacter elegans (Flexibacter elegans).